Here is a 166-residue protein sequence, read N- to C-terminus: Crossover junction endodeoxyribonuclease RuvC (166 aa).

Residues Asp-11, Glu-71, and Asp-142 contribute to the active site. Mg(2+) is bound by residues Asp-11, Glu-71, and Asp-142.

This sequence belongs to the RuvC family. In terms of assembly, homodimer which binds Holliday junction (HJ) DNA. The HJ becomes 2-fold symmetrical on binding to RuvC with unstacked arms; it has a different conformation from HJ DNA in complex with RuvA. In the full resolvosome a probable DNA-RuvA(4)-RuvB(12)-RuvC(2) complex forms which resolves the HJ. Requires Mg(2+) as cofactor.

Its subcellular location is the cytoplasm. The enzyme catalyses Endonucleolytic cleavage at a junction such as a reciprocal single-stranded crossover between two homologous DNA duplexes (Holliday junction).. Its function is as follows. The RuvA-RuvB-RuvC complex processes Holliday junction (HJ) DNA during genetic recombination and DNA repair. Endonuclease that resolves HJ intermediates. Cleaves cruciform DNA by making single-stranded nicks across the HJ at symmetrical positions within the homologous arms, yielding a 5'-phosphate and a 3'-hydroxyl group; requires a central core of homology in the junction. The consensus cleavage sequence is 5'-(A/T)TT(C/G)-3'. Cleavage occurs on the 3'-side of the TT dinucleotide at the point of strand exchange. HJ branch migration catalyzed by RuvA-RuvB allows RuvC to scan DNA until it finds its consensus sequence, where it cleaves and resolves the cruciform DNA. In Maricaulis maris (strain MCS10) (Caulobacter maris), this protein is Crossover junction endodeoxyribonuclease RuvC.